Consider the following 286-residue polypeptide: 4-diphosphocytidyl-2-C-methyl-D-erythritol kinase (286 aa).

Residue K13 is part of the active site. 99-109 serves as a coordination point for ATP; sequence PMGGGLGGGSS. D141 is a catalytic residue.

It belongs to the GHMP kinase family. IspE subfamily.

It carries out the reaction 4-CDP-2-C-methyl-D-erythritol + ATP = 4-CDP-2-C-methyl-D-erythritol 2-phosphate + ADP + H(+). It participates in isoprenoid biosynthesis; isopentenyl diphosphate biosynthesis via DXP pathway; isopentenyl diphosphate from 1-deoxy-D-xylulose 5-phosphate: step 3/6. Functionally, catalyzes the phosphorylation of the position 2 hydroxy group of 4-diphosphocytidyl-2C-methyl-D-erythritol. This chain is 4-diphosphocytidyl-2-C-methyl-D-erythritol kinase, found in Herminiimonas arsenicoxydans.